The chain runs to 72 residues: Exodeoxyribonuclease 7 small subunit (72 aa).

It belongs to the XseB family. As to quaternary structure, heterooligomer composed of large and small subunits.

The protein localises to the cytoplasm. It catalyses the reaction Exonucleolytic cleavage in either 5'- to 3'- or 3'- to 5'-direction to yield nucleoside 5'-phosphates.. Its function is as follows. Bidirectionally degrades single-stranded DNA into large acid-insoluble oligonucleotides, which are then degraded further into small acid-soluble oligonucleotides. This chain is Exodeoxyribonuclease 7 small subunit, found in Chlamydia muridarum (strain MoPn / Nigg).